A 169-amino-acid chain; its full sequence is S-ribosylhomocysteine lyase (169 aa).

Residues histidine 54, histidine 58, and cysteine 128 each contribute to the Fe cation site.

The protein belongs to the LuxS family. As to quaternary structure, homodimer. Requires Fe cation as cofactor.

The enzyme catalyses S-(5-deoxy-D-ribos-5-yl)-L-homocysteine = (S)-4,5-dihydroxypentane-2,3-dione + L-homocysteine. Its function is as follows. Involved in the synthesis of autoinducer 2 (AI-2) which is secreted by bacteria and is used to communicate both the cell density and the metabolic potential of the environment. The regulation of gene expression in response to changes in cell density is called quorum sensing. Catalyzes the transformation of S-ribosylhomocysteine (RHC) to homocysteine (HC) and 4,5-dihydroxy-2,3-pentadione (DPD). This chain is S-ribosylhomocysteine lyase, found in Psychromonas ingrahamii (strain DSM 17664 / CCUG 51855 / 37).